Here is a 297-residue protein sequence, read N- to C-terminus: 33 kDa chaperonin (297 aa).

Cystine bridges form between Cys-232/Cys-234 and Cys-266/Cys-269.

The protein belongs to the HSP33 family. Under oxidizing conditions two disulfide bonds are formed involving the reactive cysteines. Under reducing conditions zinc is bound to the reactive cysteines and the protein is inactive.

The protein resides in the cytoplasm. Redox regulated molecular chaperone. Protects both thermally unfolding and oxidatively damaged proteins from irreversible aggregation. Plays an important role in the bacterial defense system toward oxidative stress. The protein is 33 kDa chaperonin of Azotobacter vinelandii (strain DJ / ATCC BAA-1303).